A 208-amino-acid chain; its full sequence is Protein-L-isoaspartate O-methyltransferase (208 aa).

The active site involves S59.

It belongs to the methyltransferase superfamily. L-isoaspartyl/D-aspartyl protein methyltransferase family.

It is found in the cytoplasm. It carries out the reaction [protein]-L-isoaspartate + S-adenosyl-L-methionine = [protein]-L-isoaspartate alpha-methyl ester + S-adenosyl-L-homocysteine. Functionally, catalyzes the methyl esterification of L-isoaspartyl residues in peptides and proteins that result from spontaneous decomposition of normal L-aspartyl and L-asparaginyl residues. It plays a role in the repair and/or degradation of damaged proteins. The sequence is that of Protein-L-isoaspartate O-methyltransferase from Aliivibrio fischeri (strain MJ11) (Vibrio fischeri).